The primary structure comprises 317 residues: 1D-myo-inositol 2-acetamido-2-deoxy-alpha-D-glucopyranoside deacetylase (317 aa).

Residues His-15, Asp-18, and His-154 each contribute to the Zn(2+) site. The interval Gln-289 to Ala-317 is disordered.

The protein belongs to the MshB deacetylase family. Requires Zn(2+) as cofactor.

It carries out the reaction 1D-myo-inositol 2-acetamido-2-deoxy-alpha-D-glucopyranoside + H2O = 1D-myo-inositol 2-amino-2-deoxy-alpha-D-glucopyranoside + acetate. In terms of biological role, catalyzes the deacetylation of 1D-myo-inositol 2-acetamido-2-deoxy-alpha-D-glucopyranoside (GlcNAc-Ins) in the mycothiol biosynthesis pathway. In Segniliparus rotundus (strain ATCC BAA-972 / CDC 1076 / CIP 108378 / DSM 44985 / JCM 13578), this protein is 1D-myo-inositol 2-acetamido-2-deoxy-alpha-D-glucopyranoside deacetylase.